Reading from the N-terminus, the 281-residue chain is UPF0294 protein VC_2238 (281 aa).

Belongs to the UPF0294 family.

The protein localises to the cytoplasm. The chain is UPF0294 protein VC_2238 from Vibrio cholerae serotype O1 (strain ATCC 39315 / El Tor Inaba N16961).